Consider the following 342-residue polypeptide: Holliday junction branch migration complex subunit RuvB (342 aa).

The segment at 1 to 185 is large ATPase domain (RuvB-L); that stretch reads MTVKPLRDVT…FPIQERLEYY (185 aa). Residues Leu-24, Arg-25, Gly-66, Lys-69, Thr-70, Ser-71, 132–134, Arg-175, Tyr-185, and Arg-222 each bind ATP; that span reads EDY. Thr-70 contributes to the Mg(2+) binding site. Residues 186–256 form a small ATPAse domain (RuvB-S) region; sequence GPAELKEIAV…VVDRTLRRLE (71 aa). The interval 259 to 342 is head domain (RuvB-H); sequence ARGLDAMDRR…RPGGKQGSLV (84 aa). DNA-binding residues include Arg-314 and Arg-319.

This sequence belongs to the RuvB family. In terms of assembly, homohexamer. Forms an RuvA(8)-RuvB(12)-Holliday junction (HJ) complex. HJ DNA is sandwiched between 2 RuvA tetramers; dsDNA enters through RuvA and exits via RuvB. An RuvB hexamer assembles on each DNA strand where it exits the tetramer. Each RuvB hexamer is contacted by two RuvA subunits (via domain III) on 2 adjacent RuvB subunits; this complex drives branch migration. In the full resolvosome a probable DNA-RuvA(4)-RuvB(12)-RuvC(2) complex forms which resolves the HJ.

It localises to the cytoplasm. It carries out the reaction ATP + H2O = ADP + phosphate + H(+). In terms of biological role, the RuvA-RuvB-RuvC complex processes Holliday junction (HJ) DNA during genetic recombination and DNA repair, while the RuvA-RuvB complex plays an important role in the rescue of blocked DNA replication forks via replication fork reversal (RFR). RuvA specifically binds to HJ cruciform DNA, conferring on it an open structure. The RuvB hexamer acts as an ATP-dependent pump, pulling dsDNA into and through the RuvAB complex. RuvB forms 2 homohexamers on either side of HJ DNA bound by 1 or 2 RuvA tetramers; 4 subunits per hexamer contact DNA at a time. Coordinated motions by a converter formed by DNA-disengaged RuvB subunits stimulates ATP hydrolysis and nucleotide exchange. Immobilization of the converter enables RuvB to convert the ATP-contained energy into a lever motion, pulling 2 nucleotides of DNA out of the RuvA tetramer per ATP hydrolyzed, thus driving DNA branch migration. The RuvB motors rotate together with the DNA substrate, which together with the progressing nucleotide cycle form the mechanistic basis for DNA recombination by continuous HJ branch migration. Branch migration allows RuvC to scan DNA until it finds its consensus sequence, where it cleaves and resolves cruciform DNA. The sequence is that of Holliday junction branch migration complex subunit RuvB from Anaeromyxobacter sp. (strain K).